A 465-amino-acid chain; its full sequence is ATP-dependent protease ATPase subunit HslU (465 aa).

Residues V19, 61–66, D277, E343, and R415 each bind ATP; that span reads GVGKTE.

Belongs to the ClpX chaperone family. HslU subfamily. In terms of assembly, a double ring-shaped homohexamer of HslV is capped on each side by a ring-shaped HslU homohexamer. The assembly of the HslU/HslV complex is dependent on binding of ATP.

The protein resides in the cytoplasm. ATPase subunit of a proteasome-like degradation complex; this subunit has chaperone activity. The binding of ATP and its subsequent hydrolysis by HslU are essential for unfolding of protein substrates subsequently hydrolyzed by HslV. HslU recognizes the N-terminal part of its protein substrates and unfolds these before they are guided to HslV for hydrolysis. In Geobacillus sp. (strain WCH70), this protein is ATP-dependent protease ATPase subunit HslU.